The sequence spans 217 residues: Pyrophosphatase PpaX (217 aa).

The active-site Nucleophile is the Asp-11.

The protein belongs to the HAD-like hydrolase superfamily. PpaX family. Requires Mg(2+) as cofactor.

It carries out the reaction diphosphate + H2O = 2 phosphate + H(+). Its function is as follows. Hydrolyzes pyrophosphate formed during P-Ser-HPr dephosphorylation by HPrK/P. Might play a role in controlling the intracellular pyrophosphate pool. The sequence is that of Pyrophosphatase PpaX from Listeria monocytogenes serotype 4a (strain HCC23).